We begin with the raw amino-acid sequence, 442 residues long: uncharacterized protein (442 aa).

[4Fe-4S] cluster contacts are provided by Cys-43, Cys-49, Cys-52, and Cys-130. S-adenosyl-L-methionine is bound by residues Gln-273, Tyr-302, Glu-323, and Asp-372. The Nucleophile role is filled by Cys-399.

The protein belongs to the class I-like SAM-binding methyltransferase superfamily. RNA M5U methyltransferase family.

This is an uncharacterized protein from Protochlamydia amoebophila (strain UWE25).